Consider the following 205-residue polypeptide: Holliday junction branch migration complex subunit RuvA (205 aa).

Positions 1-64 are domain I; it reads MIGRLRGTLA…EDAHLLYGFA (64 aa). The segment at 65-143 is domain II; sequence EKRERELFRE…AWETSPAMFT (79 aa). The interval 144 to 154 is flexible linker; that stretch reads LVSDGPLPVAS. The segment at 154–205 is domain III; that stretch reads SESSAEADAVSALVSLGYKPQEASKAIAAIKDKAGLSSEELIRRSLKGMISK.

This sequence belongs to the RuvA family. As to quaternary structure, homotetramer. Forms an RuvA(8)-RuvB(12)-Holliday junction (HJ) complex. HJ DNA is sandwiched between 2 RuvA tetramers; dsDNA enters through RuvA and exits via RuvB. An RuvB hexamer assembles on each DNA strand where it exits the tetramer. Each RuvB hexamer is contacted by two RuvA subunits (via domain III) on 2 adjacent RuvB subunits; this complex drives branch migration. In the full resolvosome a probable DNA-RuvA(4)-RuvB(12)-RuvC(2) complex forms which resolves the HJ.

It is found in the cytoplasm. Its function is as follows. The RuvA-RuvB-RuvC complex processes Holliday junction (HJ) DNA during genetic recombination and DNA repair, while the RuvA-RuvB complex plays an important role in the rescue of blocked DNA replication forks via replication fork reversal (RFR). RuvA specifically binds to HJ cruciform DNA, conferring on it an open structure. The RuvB hexamer acts as an ATP-dependent pump, pulling dsDNA into and through the RuvAB complex. HJ branch migration allows RuvC to scan DNA until it finds its consensus sequence, where it cleaves and resolves the cruciform DNA. This chain is Holliday junction branch migration complex subunit RuvA, found in Pseudomonas putida (strain ATCC 47054 / DSM 6125 / CFBP 8728 / NCIMB 11950 / KT2440).